The chain runs to 477 residues: Ribulose bisphosphate carboxylase large chain (477 aa).

The propeptide occupies 1–2 (MS). Pro-3 is subject to N-acetylproline. N6,N6,N6-trimethyllysine is present on Lys-14. Residues Asn-123 and Thr-173 each coordinate substrate. The active-site Proton acceptor is Lys-175. Substrate is bound at residue Lys-177. The Mg(2+) site is built by Lys-201, Asp-203, and Glu-204. An N6-carboxylysine modification is found at Lys-201. The active-site Proton acceptor is the His-294. Substrate contacts are provided by Arg-295, His-327, and Ser-379.

It belongs to the RuBisCO large chain family. Type I subfamily. In terms of assembly, heterohexadecamer of 8 large chains and 8 small chains; disulfide-linked. The disulfide link is formed within the large subunit homodimers. Mg(2+) serves as cofactor. The disulfide bond which can form in the large chain dimeric partners within the hexadecamer appears to be associated with oxidative stress and protein turnover.

The protein localises to the plastid. It is found in the chloroplast. The catalysed reaction is 2 (2R)-3-phosphoglycerate + 2 H(+) = D-ribulose 1,5-bisphosphate + CO2 + H2O. The enzyme catalyses D-ribulose 1,5-bisphosphate + O2 = 2-phosphoglycolate + (2R)-3-phosphoglycerate + 2 H(+). RuBisCO catalyzes two reactions: the carboxylation of D-ribulose 1,5-bisphosphate, the primary event in carbon dioxide fixation, as well as the oxidative fragmentation of the pentose substrate in the photorespiration process. Both reactions occur simultaneously and in competition at the same active site. The protein is Ribulose bisphosphate carboxylase large chain of Hyophorbe lagenicaulis (Bottle palm).